An 891-amino-acid chain; its full sequence is Aconitate hydratase A (891 aa).

[4Fe-4S] cluster is bound by residues C435, C501, and C504.

This sequence belongs to the aconitase/IPM isomerase family. Monomer. [4Fe-4S] cluster serves as cofactor.

The enzyme catalyses citrate = D-threo-isocitrate. The protein operates within carbohydrate metabolism; tricarboxylic acid cycle; isocitrate from oxaloacetate: step 2/2. Functionally, catalyzes the reversible isomerization of citrate to isocitrate via cis-aconitate. The apo form of AcnA functions as a RNA-binding regulatory protein which plays a role as a maintenance or survival enzyme during nutritional or oxidative stress. During oxidative stress inactive AcnA apo-enzyme without iron sulfur clusters binds the acnA mRNA 3' UTRs (untranslated regions), stabilizes acnA mRNA and increases AcnA synthesis, thus mediating a post-transcriptional positive autoregulatory switch. AcnA also enhances the stability of the sodA transcript. This chain is Aconitate hydratase A, found in Escherichia coli (strain K12).